Consider the following 578-residue polypeptide: NADH-quinone oxidoreductase subunit C/D (578 aa).

The NADH dehydrogenase I subunit C stretch occupies residues 1–167 (MILSLFKLFG…DEFYFTKQKE (167 aa)). Residues 192–578 (EYMFLNFGPN…IDFVMSDVDR (387 aa)) form an NADH dehydrogenase I subunit D region.

In the N-terminal section; belongs to the complex I 30 kDa subunit family. It in the C-terminal section; belongs to the complex I 49 kDa subunit family. In terms of assembly, NDH-1 is composed of 13 different subunits. Subunits NuoB, CD, E, F, and G constitute the peripheral sector of the complex.

It localises to the cell inner membrane. It catalyses the reaction a quinone + NADH + 5 H(+)(in) = a quinol + NAD(+) + 4 H(+)(out). Its function is as follows. NDH-1 shuttles electrons from NADH, via FMN and iron-sulfur (Fe-S) centers, to quinones in the respiratory chain. The immediate electron acceptor for the enzyme in this species is believed to be ubiquinone. Couples the redox reaction to proton translocation (for every two electrons transferred, four hydrogen ions are translocated across the cytoplasmic membrane), and thus conserves the redox energy in a proton gradient. This Buchnera aphidicola subsp. Cinara cedri (strain Cc) protein is NADH-quinone oxidoreductase subunit C/D.